Consider the following 265-residue polypeptide: MNSRQMYETIKERLNAHPHWTFHFDAKHDTMRIEDHRTKKGVTISLPGVIAKWHEQKDEAVREIIYYVEETLKTMEETATLSGNERNIYPVIRSTSFPTETKEGVPLLHDDHTAETRIYYALDLGKTYRLIDEQMMEKEKWNRERVKEIARFNVRSLPTPVKEDRVADNVFYFVNTNDGYDASRILNDAFLAEMHTRMEGTMAIAVPHQDVLILADLRNDIGYDVLAQMTMSFFANGRVPITALSFLYENGKLEPIFILGKKRRT.

It belongs to the UPF0354 family.

The protein is UPF0354 protein GTNG_2723 of Geobacillus thermodenitrificans (strain NG80-2).